Reading from the N-terminus, the 264-residue chain is MKLAFLCLCFISIAAAWPVSKSRQHAISASSEEKYDPRSHHTHRYHQDHVDSQSQEHLQQTQNDLASLQQTHYSSEENADVPEQPDFPDIPSKSQEAVDDDDDDDNDSNDTDESDEVVTDFPTEAPVTPFNRGDNAGRGDSVAYGFRAKAHVVKASKLRKAARKLIEDDATAEVGDSQLAGLWLPKESREQDSRELAQHQSVENDSRPRFDSPEVGGGDSKASAGVDSRESLASRSAVDTSNQTLESAEDAEDRHSIENNEVTR.

Residues 1–16 (MKLAFLCLCFISIAAA) form the signal peptide. 2 disordered regions span residues 21 to 141 (KSRQ…RGDS) and 166 to 264 (IEDD…EVTR). Over residues 31–51 (SEEKYDPRSHHTHRYHQDHVD) the composition is skewed to basic and acidic residues. Over residues 52–73 (SQSQEHLQQTQNDLASLQQTHY) the composition is skewed to polar residues. The span at 97 to 118 (AVDDDDDDDNDSNDTDESDEVV) shows a compositional bias: acidic residues. N-linked (GlcNAc...) asparagine glycans are attached at residues asparagine 106 and asparagine 109. A Cell attachment site motif is present at residues 132–134 (RGD). Residues 186–212 (KESREQDSRELAQHQSVENDSRPRFDS) are compositionally biased toward basic and acidic residues. N-linked (GlcNAc...) asparagine glycans are attached at residues asparagine 204 and asparagine 242. Residues 233–246 (ASRSAVDTSNQTLE) show a composition bias toward polar residues. The span at 252-264 (EDRHSIENNEVTR) shows a compositional bias: basic and acidic residues.

It belongs to the osteopontin family. Post-translationally, extensively phosphorylated on serine residues.

It is found in the secreted. In terms of biological role, major non-collagenous bone protein that binds tightly to hydroxyapatite. Appears to form an integral part of the mineralized matrix. Probably important to cell-matrix interaction. Acts as a cytokine involved in enhancing production of interferon-gamma and interleukin-12 and reducing production of interleukin-10 and is essential in the pathway that leads to type I immunity. This Gallus gallus (Chicken) protein is Osteopontin (SPP1).